The primary structure comprises 822 residues: Probable phosphoketolase (822 aa).

The protein belongs to the XFP family. The cofactor is thiamine diphosphate.

The sequence is that of Probable phosphoketolase from Lactococcus lactis subsp. lactis (strain IL1403) (Streptococcus lactis).